Here is a 103-residue protein sequence, read N- to C-terminus: Large ribosomal subunit protein bL36m (103 aa).

This sequence belongs to the bacterial ribosomal protein bL36 family. As to quaternary structure, component of the mitochondrial large ribosomal subunit (mt-LSU). Mature mammalian 55S mitochondrial ribosomes consist of a small (28S) and a large (39S) subunit. The 28S small subunit contains a 12S ribosomal RNA (12S mt-rRNA) and 30 different proteins. The 39S large subunit contains a 16S rRNA (16S mt-rRNA), a copy of mitochondrial valine transfer RNA (mt-tRNA(Val)), which plays an integral structural role, and 52 different proteins. bL36m has a zinc binding site.

Its subcellular location is the mitochondrion. This Homo sapiens (Human) protein is Large ribosomal subunit protein bL36m (MRPL36).